A 709-amino-acid chain; its full sequence is Myotubularin-related protein 11 (709 aa).

The interval 1 to 39 (MWWGGRGQSFNIAPQKEEPEMGSVQENRMPEPRSRQPSS) is disordered. A Myotubularin phosphatase domain is found at 196-639 (METAEDWETE…PQIRLWRRCY (444 aa)).

This sequence belongs to the protein-tyrosine phosphatase family. Non-receptor class myotubularin subfamily. Expressed in bone marrow, spleen and thymus.

The sequence is that of Myotubularin-related protein 11 (MTMR11) from Homo sapiens (Human).